Consider the following 192-residue polypeptide: MAGLRLIVGLGNPGSEHARTRHNAGFHFVEALAEKAGARWNVDSKLFGETAKVEIAGQTVWLLKPATFMNLSGKSVTAAQRFWKIEPEETLLAHDELDLAPGVARLKFDGGHGGQNGLRDTIRLLGHGKFHRLRVGIGHPGHKDRVVGWVLGRPSKDDEVLISRAIDDAIDVLPLAVQGDFSEAMKRLHTPK.

His17 serves as a coordination point for tRNA. The Proton acceptor role is filled by His22. TRNA-binding residues include Phe68, Asn70, and Asn116.

Belongs to the PTH family. In terms of assembly, monomer.

It is found in the cytoplasm. It catalyses the reaction an N-acyl-L-alpha-aminoacyl-tRNA + H2O = an N-acyl-L-amino acid + a tRNA + H(+). Hydrolyzes ribosome-free peptidyl-tRNAs (with 1 or more amino acids incorporated), which drop off the ribosome during protein synthesis, or as a result of ribosome stalling. In terms of biological role, catalyzes the release of premature peptidyl moieties from peptidyl-tRNA molecules trapped in stalled 50S ribosomal subunits, and thus maintains levels of free tRNAs and 50S ribosomes. This Stenotrophomonas maltophilia (strain R551-3) protein is Peptidyl-tRNA hydrolase.